The following is a 243-amino-acid chain: Pyridoxine 5'-phosphate synthase (243 aa).

N9 contacts 3-amino-2-oxopropyl phosphate. A 1-deoxy-D-xylulose 5-phosphate-binding site is contributed by 11–12 (DH). R20 contacts 3-amino-2-oxopropyl phosphate. Catalysis depends on H45, which acts as the Proton acceptor. Residues R47 and H52 each contribute to the 1-deoxy-D-xylulose 5-phosphate site. Catalysis depends on E72, which acts as the Proton acceptor. T102 contributes to the 1-deoxy-D-xylulose 5-phosphate binding site. H193 functions as the Proton donor in the catalytic mechanism. 3-amino-2-oxopropyl phosphate contacts are provided by residues G194 and 215 to 216 (GH).

It belongs to the PNP synthase family. As to quaternary structure, homooctamer; tetramer of dimers.

The protein localises to the cytoplasm. It catalyses the reaction 3-amino-2-oxopropyl phosphate + 1-deoxy-D-xylulose 5-phosphate = pyridoxine 5'-phosphate + phosphate + 2 H2O + H(+). Its pathway is cofactor biosynthesis; pyridoxine 5'-phosphate biosynthesis; pyridoxine 5'-phosphate from D-erythrose 4-phosphate: step 5/5. In terms of biological role, catalyzes the complicated ring closure reaction between the two acyclic compounds 1-deoxy-D-xylulose-5-phosphate (DXP) and 3-amino-2-oxopropyl phosphate (1-amino-acetone-3-phosphate or AAP) to form pyridoxine 5'-phosphate (PNP) and inorganic phosphate. This chain is Pyridoxine 5'-phosphate synthase, found in Yersinia pestis.